Reading from the N-terminus, the 130-residue chain is Large ribosomal subunit protein bL12 (130 aa).

Belongs to the bacterial ribosomal protein bL12 family. In terms of assembly, homodimer. Part of the ribosomal stalk of the 50S ribosomal subunit. Forms a multimeric L10(L12)X complex, where L10 forms an elongated spine to which 2 to 4 L12 dimers bind in a sequential fashion. Binds GTP-bound translation factors.

Functionally, forms part of the ribosomal stalk which helps the ribosome interact with GTP-bound translation factors. Is thus essential for accurate translation. The polypeptide is Large ribosomal subunit protein bL12 (Mycolicibacterium gilvum (strain PYR-GCK) (Mycobacterium gilvum (strain PYR-GCK))).